Consider the following 138-residue polypeptide: MSDTLLAFDFGTKSIGVAIGQRITGTARPLPAIKAQDGTPDWMLIERLLKEWQPDEIIVGLPLNMDGTEQPLTARARKFANRIHGRFGVTVTLHDERLSTVEARSGLFERGGYRALNKGKVDSASAVIILESYFEQGY.

This sequence belongs to the YqgF nuclease family.

The protein resides in the cytoplasm. Its function is as follows. Could be a nuclease involved in processing of the 5'-end of pre-16S rRNA. This chain is Putative pre-16S rRNA nuclease, found in Salmonella dublin (strain CT_02021853).